An 859-amino-acid polypeptide reads, in one-letter code: MDEPESESPASILASVRAQEAQFELLSRALEEERRHVTAQLDRVWVTPQEPPLANGSLTRRQQDGLPFLYTPTRMEAHSVHADERYVIDDSSYKSCTLTDESRCSEIPIQTVVGYSQTLDRPYREAAGSGGAYTTVPRNYHFRGPGVDSTMPLISQSPHPGYSSLSRPNQRYRSVDPFRGPGYGPQPQVRGGGLGGSQSDLLSGRIYGSEDAYGLEDDRRSLGGFIDGPDYATTGRRGANGGDPRRRLRSYEDPLSDHFGSIPTSGSLSSLGPAPLTLAPNSGPWRHPELPEVLAMLSYTLDAVRLNAAAYLQHLSYRNEDVKREVCRLRGIPPLISLLEDPRAPIRLAACGALKNLSYGPARENKMAVKNCDGVPALARLLRRRGEGIEGRELAECVTGTLWNLSSLDSVKMELVDQALYTLTQEILVPHSGWQQDGGMQDRVEGKPRHVEWEPALVNTTGCLRNISSERSEARRKMRECEGLVDSVVHILRSEVSHGLVDSKLLENVVCLLRNISYHVHREIPHAEKYMESPQNASAETQNPSCFGVRRGKGKKASEEAVDTVDFPKQTMPAQGYDLLFQPEIVRLYISLVKSSHTPAVLEASAGAIQNLCAGNWVYGRCIRAAVRQEKGLSSLADHLTHESERVVRAICGALRNLCGDNRNRELIGKHALNSLVARLSSSSAQSSALSEDTNVCVINTIHEVISGNLEAAKRLRESQGIERLVLINKGGGRSEREIRAAGFCLQTIWGYKELRRPLEKDGWKKSDFQVSTAATSSVQGYDDSTLPLIDRNLKNEKKSVNADIPLNDFIADQFTHNGDSSNRLPTRSDELSELDPLKECSVSAGGSLNLGDAEDQRV.

Residues 15-44 (SVRAQEAQFELLSRALEEERRHVTAQLDRV) adopt a coiled-coil conformation. Residues 226–254 (IDGPDYATTGRRGANGGDPRRRLRSYEDP) form a disordered region. Basic and acidic residues predominate over residues 243–254 (DPRRRLRSYEDP). 10 ARM repeats span residues 279–317 (APNS…HLSY), 320–359 (EDVK…NLSY), 363–401 (RENK…VTGT), 402–446 (LWNL…RVEG), 464–503 (LRNI…LVDS), 513–552 (LRNI…VRRG), 574–614 (AQGY…NLCA), 621–660 (RCIR…NLCG), 661–700 (DNRN…CVIN), and 701–746 (TIHE…GFCL).

This sequence belongs to the beta-catenin family. In terms of assembly, interacts with C-cadherin and with zbtb33. In terms of tissue distribution, ubiquitously expressed.

The protein localises to the cell junction. The protein resides in the adherens junction. It is found in the cytoplasm. It localises to the nucleus. Its subcellular location is the cell membrane. Its function is as follows. Key regulator of cell-cell adhesion that associates with and regulates the cell adhesion properties of both C-, E- and N-cadherins, being critical for their surface stability. Beside cell-cell adhesion, regulates gene transcription through several transcription factors including ZBTB33/Kaiso2 and GLIS2, and the activity of Rho family GTPases and downstream cytoskeletal dynamics. Implicated both in cell transformation by SRC and in ligand-induced receptor signaling through the EGF, PDGF, CSF-1 and ERBB2 receptors. Required for gastrulation, axial elongation and development of the craniofacial skeleton and eye. The chain is Catenin delta-1 (ctnnd1) from Xenopus laevis (African clawed frog).